Reading from the N-terminus, the 1022-residue chain is Translation initiation factor IF-2 (1022 aa).

Basic and acidic residues predominate over residues 82–94 (EQSRKTLEKEQHL). 2 disordered regions span residues 82-129 (EQSR…AVPA) and 342-436 (SENK…QREL). Over residues 104–115 (ASKSSAKGSESA) the composition is skewed to low complexity. The span at 375-384 (KAKKGKKKKK) shows a compositional bias: basic residues. Residues 421–436 (SEREREQEEGAAQREL) show a composition bias toward basic and acidic residues. Positions 519–689 (TRPPVVTIMG…LTEAELRELK (171 aa)) constitute a tr-type G domain. The segment at 528–535 (GHVDHGKT) is G1. 528 to 535 (GHVDHGKT) contributes to the GTP binding site. The segment at 553 to 557 (GITQH) is G2. Residues 575–578 (DTPG) are G3. GTP is bound by residues 575-579 (DTPGH) and 629-632 (NKID). The interval 629 to 632 (NKID) is G4. Residues 665–667 (SAK) are G5.

This sequence belongs to the TRAFAC class translation factor GTPase superfamily. Classic translation factor GTPase family. IF-2 subfamily.

It is found in the cytoplasm. Functionally, one of the essential components for the initiation of protein synthesis. Protects formylmethionyl-tRNA from spontaneous hydrolysis and promotes its binding to the 30S ribosomal subunits. Also involved in the hydrolysis of GTP during the formation of the 70S ribosomal complex. In Chlorobium chlorochromatii (strain CaD3), this protein is Translation initiation factor IF-2.